The sequence spans 93 residues: Small ribosomal subunit protein bS20 (93 aa).

Belongs to the bacterial ribosomal protein bS20 family.

Functionally, binds directly to 16S ribosomal RNA. The sequence is that of Small ribosomal subunit protein bS20 from Dictyoglomus turgidum (strain DSM 6724 / Z-1310).